The primary structure comprises 195 residues: MAPPVRYCIPGERLCNLEEGSPGSGTYTRHGYIFSSLAGCLMKSSENGALPVVSVVRETESQLLPDVGAIVTCKVSSINSRFAKVHILYVGSMPLKNSFRGTIRKEDVRATEKDKVEIYKSFRPGDIVLAKVISLGDAQSNYLLTTAENELGVVVAHSESGIQMVPISWCEMQCPKTHTKEFRKVARVQPEFLQT.

2 positions are modified to phosphoserine: Ser21 and Ser98. An S1 motif domain is found at 66–147 (DVGAIVTCKV…AQSNYLLTTA (82 aa)).

The protein belongs to the CSL4 family. As to quaternary structure, component of the RNA exosome core complex (Exo-9), composed of EXOSC1, EXOSC2, EXOSC3, EXOSC4, EXOSC5, EXOSC6, EXOSC7, EXOSC8 and EXOSC9; within the complex interacts with EXOSC6. The catalytically inactive RNA exosome core complex (Exo-9) associates with the catalytic subunit EXOSC10/RRP6. Exo-9 may associate with DIS3 to form the nucleolar exosome complex, or DIS3L to form the cytoplasmic exosome complex. Exo-9 is formed by a hexameric base ring consisting of the heterodimers EXOSC4-EXOSC9, EXOSC5-EXOSC8 and EXOSC6-EXOSC7, and a cap ring consisting of EXOSC1, EXOSC2 and EXOSC3. The RNA exosome complex associates with cofactors C1D/RRP47, MPHOSPH6/MPP6 and MTREX/MTR4. Interacts with DDX60.

It is found in the nucleus. The protein localises to the nucleolus. The protein resides in the cytoplasm. Its function is as follows. Non-catalytic component of the RNA exosome complex which has 3'-&gt;5' exoribonuclease activity and participates in a multitude of cellular RNA processing and degradation events. In the nucleus, the RNA exosome complex is involved in proper maturation of stable RNA species such as rRNA, snRNA and snoRNA, in the elimination of RNA processing by-products and non-coding 'pervasive' transcripts, such as antisense RNA species and promoter-upstream transcripts (PROMPTs), and of mRNAs with processing defects, thereby limiting or excluding their export to the cytoplasm. The RNA exosome may be involved in Ig class switch recombination (CSR) and/or Ig variable region somatic hypermutation (SHM) by targeting AICDA deamination activity to transcribed dsDNA substrates. In the cytoplasm, the RNA exosome complex is involved in general mRNA turnover and specifically degrades inherently unstable mRNAs containing AU-rich elements (AREs) within their 3' untranslated regions, and in RNA surveillance pathways, preventing translation of aberrant mRNAs. It seems to be involved in degradation of histone mRNA. The catalytic inactive RNA exosome core complex of 9 subunits (Exo-9) is proposed to play a pivotal role in the binding and presentation of RNA for ribonucleolysis, and to serve as a scaffold for the association with catalytic subunits and accessory proteins or complexes. EXOSC1 as peripheral part of the Exo-9 complex stabilizes the hexameric ring of RNase PH-domain subunits through contacts with EXOSC6 and EXOSC8. The polypeptide is Exosome complex component CSL4 (EXOSC1) (Homo sapiens (Human)).